The primary structure comprises 283 residues: Hydroxyacylglutathione hydrolase-like protein (283 aa).

Residues His54, His56, Asp58, His59, His110, Asp134, and His173 each contribute to the Zn(2+) site.

It belongs to the metallo-beta-lactamase superfamily. Glyoxalase II family. Zn(2+) serves as cofactor.

Hydrolase acting on ester bonds. In Mus musculus (Mouse), this protein is Hydroxyacylglutathione hydrolase-like protein (Haghl).